Consider the following 90-residue polypeptide: Acylphosphatase (90 aa).

An Acylphosphatase-like domain is found at Ala3–Asn90. Active-site residues include Arg18 and Asn36.

The protein belongs to the acylphosphatase family.

It carries out the reaction an acyl phosphate + H2O = a carboxylate + phosphate + H(+). This is Acylphosphatase (acyP) from Lactiplantibacillus plantarum (strain ATCC BAA-793 / NCIMB 8826 / WCFS1) (Lactobacillus plantarum).